The chain runs to 323 residues: Serine/threonine-protein kinase-transforming protein raf (323 aa).

In terms of domain architecture, Protein kinase spans Val24–Leu284. Residues Ile30–Val38 and Lys50 contribute to the ATP site. Asp143 acts as the Proton acceptor in catalysis.

Belongs to the protein kinase superfamily. TKL Ser/Thr protein kinase family. RAF subfamily.

It carries out the reaction L-seryl-[protein] + ATP = O-phospho-L-seryl-[protein] + ADP + H(+). The enzyme catalyses L-threonyl-[protein] + ATP = O-phospho-L-threonyl-[protein] + ADP + H(+). In Murine sarcoma virus 3611, this protein is Serine/threonine-protein kinase-transforming protein raf (V-RAF).